The sequence spans 393 residues: Reticulon-like protein 2 (393 aa).

The span at 1–21 (MNRNTTTNKNANLNNSRNANA) shows a compositional bias: low complexity. The interval 1–25 (MNRNTTTNKNANLNNSRNANAPGEA) is disordered. Topologically, residues 1–60 (MNRNTTTNKNANLNNSRNANAPGEAGHQNKTGLIYWTNPSKSGASFAATLVSLLILRNVN) are cytoplasmic. One can recognise a Reticulon domain in the interval 30-236 (KTGLIYWTNP…SISNENKSST (207 aa)). Residues 61–81 (VISVLLKIGYMVLFTSFAVEL) traverse the membrane as a helical segment. Residues 82 to 149 (STKVLFDKGV…IGVSLYFLHG (68 aa)) are Lumenal-facing. A glycan (N-linked (GlcNAc...) asparagine) is linked at Asn137. A helical transmembrane segment spans residues 150–170 (LFAIFSMNTVLIMTTIFLYTV). Residues 171–393 (PLIYDRKQAR…HGLKQKLQHA (223 aa)) are Cytoplasmic-facing. Disordered regions lie at residues 214-313 (IIPP…DVKT) and 339-393 (GDYN…LQHA). The segment covering 220–285 (DEGSYSTSIS…PVSQNENIGT (66 aa)) has biased composition (polar residues). Ser278 bears the Phosphoserine mark. Residues 289 to 313 (GKQEIPTEKDFNNRHENFSKPDVKT) show a composition bias toward basic and acidic residues. The span at 365–376 (PAESQSIPIKNN) shows a compositional bias: polar residues. Over residues 381–393 (KTTHGLKQKLQHA) the composition is skewed to basic residues.

The protein resides in the endoplasmic reticulum membrane. In Saccharomyces cerevisiae (strain ATCC 204508 / S288c) (Baker's yeast), this protein is Reticulon-like protein 2 (RTN2).